The sequence spans 224 residues: Lipoprotein-releasing system ATP-binding protein LolD (224 aa).

The ABC transporter domain maps to 5 to 224 (LVLDGLTKAY…VVRLEAGRVV (220 aa)). 42–49 (APSGAGKS) is an ATP binding site.

The protein belongs to the ABC transporter superfamily. Lipoprotein translocase (TC 3.A.1.125) family. The complex is composed of two ATP-binding proteins (LolD) and two transmembrane proteins (LolC and LolE).

It is found in the cell inner membrane. Part of the ABC transporter complex LolCDE involved in the translocation of mature outer membrane-directed lipoproteins, from the inner membrane to the periplasmic chaperone, LolA. Responsible for the formation of the LolA-lipoprotein complex in an ATP-dependent manner. The polypeptide is Lipoprotein-releasing system ATP-binding protein LolD (Cereibacter sphaeroides (strain ATCC 17023 / DSM 158 / JCM 6121 / CCUG 31486 / LMG 2827 / NBRC 12203 / NCIMB 8253 / ATH 2.4.1.) (Rhodobacter sphaeroides)).